A 309-amino-acid chain; its full sequence is Tumor necrosis factor ligand superfamily member 9 (309 aa).

Residues 1–16 (MDQHTLDVEDTADARH) show a composition bias toward basic and acidic residues. The interval 1 to 20 (MDQHTLDVEDTADARHPAGT) is disordered. The Cytoplasmic segment spans residues 1–82 (MDQHTLDVED…ALNFCSRHPK (82 aa)). Residues 83–103 (LYGLVALVLLLLIAACVPIFT) form a helical; Signal-anchor for type II membrane protein membrane-spanning segment. The Extracellular portion of the chain corresponds to 104–309 (RTEPRPALTI…FLVKPDNPWE (206 aa)). 3 N-linked (GlcNAc...) asparagine glycosylation sites follow: asparagine 139, asparagine 161, and asparagine 293. One can recognise a THD domain in the interval 147–302 (VFAKLLAKNQ…NTTSFGLFLV (156 aa)).

Belongs to the tumor necrosis factor family. As to quaternary structure, homotrimer.

The protein localises to the membrane. In terms of biological role, cytokine that binds to TNFRSF9. Induces the proliferation of activated peripheral blood T-cells. May have a role in activation-induced cell death (AICD). May play a role in cognate interactions between T-cells and B-cells/macrophages. In Mus musculus (Mouse), this protein is Tumor necrosis factor ligand superfamily member 9 (Tnfsf9).